The primary structure comprises 533 residues: Calcineurin-interacting protein 3 (533 aa).

Disordered regions lie at residues 1-30 (MRSL…NMDI), 53-85 (PRKQ…YTKR), and 359-404 (MDMS…LTLP). A compositionally biased stretch (basic and acidic residues) spans 61 to 85 (KRAEPVSEEHRKKESSKNSREYTKR). Over residues 359 to 372 (MDMSQTLSPEQTLS) the composition is skewed to polar residues. A compositionally biased stretch (basic and acidic residues) spans 373–384 (PREKLQVQDRKI).

It is found in the nucleus. This chain is Calcineurin-interacting protein 3, found in Caenorhabditis elegans.